The sequence spans 85 residues: Coiled-coil-helix-coiled-coil-helix domain-containing protein 7 (85 aa).

Positions 13–55 (INPCLSESDASTRCMDENNYDRERCSSYFLKYKNCRRFWNSVM) constitute a CHCH domain. 2 consecutive short sequence motifs (cx9C motif) follow at residues 16 to 26 (CLSESDASTRC) and 37 to 47 (CSSYFLKYKNC). Intrachain disulfides connect C16–C47 and C26–C37.

This sequence belongs to the CHCHD7 family. Monomer.

It is found in the mitochondrion intermembrane space. The chain is Coiled-coil-helix-coiled-coil-helix domain-containing protein 7 (Chchd7) from Mus musculus (Mouse).